A 216-amino-acid polypeptide reads, in one-letter code: MOB kinase activator 3C (216 aa).

The Zn(2+) site is built by Cys82, Cys87, His164, and His169.

This sequence belongs to the MOB1/phocein family.

Its function is as follows. May regulate the activity of kinases. This Homo sapiens (Human) protein is MOB kinase activator 3C (MOB3C).